The sequence spans 191 residues: dTTP/UTP pyrophosphatase (191 aa).

The active-site Proton acceptor is the D71.

This sequence belongs to the Maf family. YhdE subfamily. It depends on a divalent metal cation as a cofactor.

The protein localises to the cytoplasm. The enzyme catalyses dTTP + H2O = dTMP + diphosphate + H(+). The catalysed reaction is UTP + H2O = UMP + diphosphate + H(+). Its function is as follows. Nucleoside triphosphate pyrophosphatase that hydrolyzes dTTP and UTP. May have a dual role in cell division arrest and in preventing the incorporation of modified nucleotides into cellular nucleic acids. The chain is dTTP/UTP pyrophosphatase from Hyphomonas neptunium (strain ATCC 15444).